The sequence spans 301 residues: D-psicose 3-epimerase (301 aa).

A substrate-binding site is contributed by Tyr16. Residue Glu162 is the Proton donor/acceptor of the active site. Glu162 contacts Mn(2+). Residues Glu168 and 195–198 contribute to the substrate site; that span reads DTFH. Asp195 and His221 together coordinate Mn(2+). Arg227 is a substrate binding site. Glu256 (proton donor/acceptor) is an active-site residue. Mn(2+) is bound at residue Glu256.

It belongs to the hyi family. As to quaternary structure, homotetramer. Mn(2+) serves as cofactor. The cofactor is Co(2+).

The catalysed reaction is D-allulose = keto-D-fructose. With respect to regulation, completely inhibited by EDTA and partially inhibited by Zn(2+), Mg(2+) and Cu(2+). Involved in the biosynthesis of D-psicose. Catalyzes the reversible epimerization of D-fructose at the C3 position to yield D-psicose. The enzyme is highly specific for D-psicose and shows very low activity with D-tagatose. The sequence is that of D-psicose 3-epimerase from Enterocloster bolteae (strain ATCC BAA-613 / DSM 15670 / CCUG 46953 / JCM 12243 / WAL 16351) (Clostridium bolteae).